A 508-amino-acid chain; its full sequence is Ribonuclease Y (508 aa).

Residues 1-21 (MMLWYIVAGAGGLLIGYLIAN) form a helical membrane-spanning segment. Residues 198-283 (TVSTVSLPSD…EMYEKAKQEV (86 aa)) enclose the KH domain. In terms of domain architecture, HD spans 324–417 (VLNHSIEVAL…VAAADALSAA (94 aa)).

This sequence belongs to the RNase Y family.

The protein localises to the cell membrane. Its function is as follows. Endoribonuclease that initiates mRNA decay. This is Ribonuclease Y from Thermotoga maritima (strain ATCC 43589 / DSM 3109 / JCM 10099 / NBRC 100826 / MSB8).